The following is a 455-amino-acid chain: Bifunctional protein GlmU (455 aa).

Residues 1–232 are pyrophosphorylase; the sequence is MASITGALIL…DPNLLGVNDP (232 aa). UDP-N-acetyl-alpha-D-glucosamine is bound by residues 10–13, K24, Q75, and 80–81; these read LAAG and GT. Mg(2+) is bound at residue D106. 4 residues coordinate UDP-N-acetyl-alpha-D-glucosamine: G141, E155, N172, and N230. N230 contributes to the Mg(2+) binding site. The interval 233–253 is linker; that stretch reads AELIRSEALVRARIALNWIEK. The tract at residues 254–455 is N-acetyltransferase; that stretch reads RVLIHAPETV…QTTLPRRRNS (202 aa). The UDP-N-acetyl-alpha-D-glucosamine site is built by R336 and K354. H366 serves as the catalytic Proton acceptor. Residues Y369 and N380 each coordinate UDP-N-acetyl-alpha-D-glucosamine. Residues A383, 389–390, S408, A426, and R443 contribute to the acetyl-CoA site; that span reads NY.

In the N-terminal section; belongs to the N-acetylglucosamine-1-phosphate uridyltransferase family. This sequence in the C-terminal section; belongs to the transferase hexapeptide repeat family. In terms of assembly, homotrimer. Mg(2+) is required as a cofactor.

Its subcellular location is the cytoplasm. It carries out the reaction alpha-D-glucosamine 1-phosphate + acetyl-CoA = N-acetyl-alpha-D-glucosamine 1-phosphate + CoA + H(+). The catalysed reaction is N-acetyl-alpha-D-glucosamine 1-phosphate + UTP + H(+) = UDP-N-acetyl-alpha-D-glucosamine + diphosphate. It participates in nucleotide-sugar biosynthesis; UDP-N-acetyl-alpha-D-glucosamine biosynthesis; N-acetyl-alpha-D-glucosamine 1-phosphate from alpha-D-glucosamine 6-phosphate (route II): step 2/2. The protein operates within nucleotide-sugar biosynthesis; UDP-N-acetyl-alpha-D-glucosamine biosynthesis; UDP-N-acetyl-alpha-D-glucosamine from N-acetyl-alpha-D-glucosamine 1-phosphate: step 1/1. Its pathway is bacterial outer membrane biogenesis; LPS lipid A biosynthesis. Functionally, catalyzes the last two sequential reactions in the de novo biosynthetic pathway for UDP-N-acetylglucosamine (UDP-GlcNAc). The C-terminal domain catalyzes the transfer of acetyl group from acetyl coenzyme A to glucosamine-1-phosphate (GlcN-1-P) to produce N-acetylglucosamine-1-phosphate (GlcNAc-1-P), which is converted into UDP-GlcNAc by the transfer of uridine 5-monophosphate (from uridine 5-triphosphate), a reaction catalyzed by the N-terminal domain. In Nitratidesulfovibrio vulgaris (strain DSM 19637 / Miyazaki F) (Desulfovibrio vulgaris), this protein is Bifunctional protein GlmU.